A 257-amino-acid polypeptide reads, in one-letter code: Discoidin-2 (257 aa).

Positions 1–155 (MSVPAGSVSC…SLRWELYALP (155 aa)) are beta-sandwich. Positions 10-154 (CLANALLNLR…ISLRWELYAL (145 aa)) constitute an F5/8 type C domain. Positions 39, 40, and 47 each coordinate Ca(2+). A Cell attachment site motif is present at residues 81 to 83 (RGD). Residue His84 is modified to Phosphohistidine. Residues 156-162 (VKSYSNP) are linker. The segment at 163–257 (SVQVGEVSIG…FDYVAVEFNN (95 aa)) is lectin-like. Asp209, Arg218, and Trp238 together coordinate a carbohydrate.

In terms of assembly, homotrimer. Post-translationally, the N-terminus is blocked. Maturing spore cells.

Its function is as follows. Galactose-binding lectin. May be necessary for the primary process of spore formation and may be involved in spore coat formation. This chain is Discoidin-2 (dscE), found in Dictyostelium discoideum (Social amoeba).